A 191-amino-acid polypeptide reads, in one-letter code: Gamma-glutamylaminecyclotransferase B (191 aa).

Substrate is bound at residue 7 to 10; sequence YGTL. Glutamate 82 functions as the Proton acceptor in the catalytic mechanism. Polar residues predominate over residues 155–178; sequence SADFSQNSEQEIKKNNSLQILTST. Residues 155-191 form a disordered region; sequence SADFSQNSEQEIKKNNSLQILTSTGDDHDVNFRGPLQ.

It belongs to the gamma-glutamylcyclotransferase family.

The enzyme catalyses epsilon-(gamma-L-glutamyl)-L-lysine = 5-oxo-L-proline + L-lysine. Its function is as follows. May contribute to degradation of proteins cross-linked by transglutaminases by degrading the cross-link between a lysine and a glutamic acid residue. Catalyzes the formation of 5-oxo-L-proline from L-gamma-glutamyl-L-epsilon-lysine. The chain is Gamma-glutamylaminecyclotransferase B (ggact.2) from Danio rerio (Zebrafish).